We begin with the raw amino-acid sequence, 430 residues long: Adenylosuccinate synthetase (430 aa).

GTP-binding positions include 12 to 18 (GDEGKGK) and 40 to 42 (GHT). Catalysis depends on D13, which acts as the Proton acceptor. D13 and G40 together coordinate Mg(2+). IMP-binding positions include 13 to 16 (DEGK), 38 to 41 (NAGH), T129, R143, Q224, T239, and R303. The active-site Proton donor is the H41. Substrate is bound at residue 299 to 305 (TVSNRKR). GTP is bound by residues R305, 331-333 (KLD), and 413-415 (STG).

Belongs to the adenylosuccinate synthetase family. In terms of assembly, homodimer. It depends on Mg(2+) as a cofactor.

The protein resides in the cytoplasm. It catalyses the reaction IMP + L-aspartate + GTP = N(6)-(1,2-dicarboxyethyl)-AMP + GDP + phosphate + 2 H(+). It functions in the pathway purine metabolism; AMP biosynthesis via de novo pathway; AMP from IMP: step 1/2. Its function is as follows. Plays an important role in the de novo pathway of purine nucleotide biosynthesis. Catalyzes the first committed step in the biosynthesis of AMP from IMP. In Ehrlichia chaffeensis (strain ATCC CRL-10679 / Arkansas), this protein is Adenylosuccinate synthetase.